A 1220-amino-acid polypeptide reads, in one-letter code: Protein patched homolog 1 (1220 aa).

The disordered stretch occupies residues 1-27 (MASDPRDPGPAGGVFGDLPPSYTRSPP). Topologically, residues 1–84 (MASDPRDPGP…GCHIQRHCGK (84 aa)) are cytoplasmic. Residues 85-105 (VLFIGLLVFGALSVGLRVAAI) form a helical membrane-spanning segment. Residues 106–419 (ETDIEKLWVE…LNDIMKSFSD (314 aa)) lie on the Extracellular side of the membrane. Asn397 is a glycosylation site (N-linked (GlcNAc...) asparagine). A helical transmembrane segment spans residues 420-440 (VSVIRVAGGYLLMLAYACVTM). The SSD domain occupies 421–579 (SVIRVAGGYL…LLIFPAILSL (159 aa)). Over 441–449 (LRWDCAKSQ) the chain is Cytoplasmic. A helical transmembrane segment spans residues 450–470 (GAVGLAGVLLVALSVAAGLGL). Over 471–484 (CSLLGLSFNAATTQ) the chain is Extracellular. A helical membrane pass occupies residues 485–505 (VLPSLALGIGVDDMFLLGHSF). Residues 506 to 528 (TETRSNIPFKERTGDCLRRTGTS) lie on the Cytoplasmic side of the membrane. Residues 529–549 (VALTSVNNMIAFFMAALVPIP) form a helical membrane-spanning segment. Residues 550 to 558 (ALRAFSLQA) lie on the Extracellular side of the membrane. Residues 559–579 (AVVVVFNFAMALLIFPAILSL) traverse the membrane as a helical segment. The Cytoplasmic segment spans residues 580–739 (DLHRREDKRL…APLLLKPETK (160 aa)). A helical membrane pass occupies residues 740-760 (TVVVVVFVALLSLSLYGTTMV). Topologically, residues 761–1016 (HDGLYLTDIV…WEQYIGLRHW (256 aa)) are extracellular. Residues Asn865 and Asn888 are each glycosylated (N-linked (GlcNAc...) asparagine). Residues 1017–1037 (FLLSISVVLACTFLVCAILLL) form a helical membrane-spanning segment. Over 1038–1044 (NPWTAGV) the chain is Cytoplasmic. Residues 1045–1065 (IVFILPMMTVELFGIMGLIGI) form a helical membrane-spanning segment. Residues 1066–1072 (KLSAIPV) are Extracellular-facing. A helical membrane pass occupies residues 1073 to 1093 (VILIASVGIGVEFTVHIALGF). The Cytoplasmic portion of the chain corresponds to 1094-1110 (LTAIGDRNTRSAVAMEH). A helical transmembrane segment spans residues 1111 to 1131 (MFAPVIDGAISTLLGVLMLAG). The Extracellular portion of the chain corresponds to 1132 to 1143 (SEFDFIMRYFFA). Residues 1144–1164 (VLAILTLLGILNGLVLLPVLL) traverse the membrane as a helical segment. Over 1165 to 1220 (SLMGPPAEVVPANNANHLQSPSPEPMPPPMNHHGYYAGHIPKASHQAFSETSDSEY) the chain is Cytoplasmic.

The protein belongs to the patched family. Post-translationally, glycosylation is necessary for SHH binding. As to expression, detected in embryonic presomitic mesoderm, neuroectoderm, tissue surrounding the notochord, ventral neural tube.

The protein localises to the membrane. Its function is as follows. Acts as a receptor for sonic hedgehog (SHH), indian hedgehog (IHH) and desert hedgehog (DHH). Associates with the smoothened protein (SMO) to transduce the hedgehog's proteins signal. This is Protein patched homolog 1 (ptch1) from Danio rerio (Zebrafish).